Here is an 828-residue protein sequence, read N- to C-terminus: Periplasmic nitrate reductase (828 aa).

The tat-type signal signal peptide spans 1–31 (MKLSRRSFMKANAVAAVAAAAGLSVPGVARA). One can recognise a 4Fe-4S Mo/W bis-MGD-type domain in the interval 39–95 (IKWDKAPCRFCGTGCGVLVGTQQGRVVACQGDPDAPVNRGLNCIKGYFLPKIMYGKD). [4Fe-4S] cluster is bound by residues Cys-46, Cys-49, Cys-53, and Cys-81. Residues Lys-83, Gln-150, Asn-175, Cys-179, 212-219 (WGANMAEM), 243-247 (STYQH), 262-264 (QSD), Met-372, Gln-376, Asn-482, 508-509 (SD), Lys-531, Asp-558, and 718-727 (TGRVLEHWHT) each bind Mo-bis(molybdopterin guanine dinucleotide). Phe-794 is a substrate binding site. The Mo-bis(molybdopterin guanine dinucleotide) site is built by Asn-802 and Lys-819.

It belongs to the prokaryotic molybdopterin-containing oxidoreductase family. NasA/NapA/NarB subfamily. In terms of assembly, component of the periplasmic nitrate reductase NapAB complex composed of NapA and NapB. [4Fe-4S] cluster is required as a cofactor. Requires Mo-bis(molybdopterin guanine dinucleotide) as cofactor. In terms of processing, predicted to be exported by the Tat system. The position of the signal peptide cleavage has not been experimentally proven.

It localises to the periplasm. The catalysed reaction is 2 Fe(II)-[cytochrome] + nitrate + 2 H(+) = 2 Fe(III)-[cytochrome] + nitrite + H2O. Catalytic subunit of the periplasmic nitrate reductase complex NapAB. Receives electrons from NapB and catalyzes the reduction of nitrate to nitrite. This is Periplasmic nitrate reductase from Shigella boydii serotype 4 (strain Sb227).